A 252-amino-acid chain; its full sequence is Protein lin-28 homolog B (252 aa).

A disordered region spans residues Met1–Val30. A compositionally biased stretch (basic and acidic residues) spans Gly9–Glu19. Residues Leu32–Pro105 enclose the CSD domain. 2 CCHC-type zinc fingers span residues Asp130 to Leu147 and Lys152 to His169. Positions 132, 135, 140, 145, 154, 157, 162, and 167 each coordinate Zn(2+). The disordered stretch occupies residues Val172–Lys252. Residues Gly213–Ser222 are compositionally biased toward basic and acidic residues. Positions Pro225–Glu238 are enriched in polar residues.

Belongs to the lin-28 family.

The protein resides in the nucleus. It is found in the nucleolus. Functionally, suppressor of specific microRNA (miRNA) biogenesis. Binds target primary miRNA transcripts and sequester them in the nucleolus, away from the microprocessor complex, hence preventing their processing into mature miRNA. The specific interaction with target pri-miRNAs occurs via an 5'-GGAG-3' motif in the pre-miRNA terminal loop. The protein is Protein lin-28 homolog B (lin28b) of Xenopus laevis (African clawed frog).